We begin with the raw amino-acid sequence, 552 residues long: Arginine--tRNA ligase (552 aa).

Residues 124 to 134 carry the 'HIGH' region motif; it reads GNPTGPLHLAH.

It belongs to the class-I aminoacyl-tRNA synthetase family. As to quaternary structure, monomer.

Its subcellular location is the cytoplasm. It catalyses the reaction tRNA(Arg) + L-arginine + ATP = L-arginyl-tRNA(Arg) + AMP + diphosphate. The sequence is that of Arginine--tRNA ligase from Tropheryma whipplei (strain Twist) (Whipple's bacillus).